Here is a 274-residue protein sequence, read N- to C-terminus: Syntaxin-12 (274 aa).

The segment at 1-20 is disordered; sequence MSYGPLDMYRNPGPSGPQPR. Serine 2 is subject to N-acetylserine. The Cytoplasmic segment spans residues 2–250; that stretch reads SYGPLDMYRN…AYYQKKSRKK (249 aa). The stretch at 34–80 forms a coiled coil; it reads QRISQATAQIKNLMSQLGTKQDSSKLQENLQQFQHSTNQLAKETNEL. The tract at residues 128–150 is disordered; that stretch reads EKESIARARAGSRLSAEDRQREE. Phosphoserine is present on residues serine 139, serine 142, serine 218, and serine 225. In terms of domain architecture, t-SNARE coiled-coil homology spans 178 to 240; that stretch reads LELIKERETA…ERASDQLQRA (63 aa). The chain crosses the membrane as a helical; Anchor for type IV membrane protein span at residues 251–271; that stretch reads MCILVLVLSVIVTVLVVVIWV. Over 272 to 274 the chain is Vesicular; the sequence is ASK.

This sequence belongs to the syntaxin family. Associates with the BLOC-1 complex. Interacts with BLOC1S6. Interacts with NAPA and SNAP23. Identified in a complex containing STX6, STX12, VAMP4 and VTI1A. Interacts with GRIPAP1. Forms a complex with GRIP1, GRIA2 and NSG1; controls the intracellular fate of AMPAR and the endosomal sorting of the GRIA2 subunit toward recycling and membrane targeting. Interacts with NSG1. Interacts with TPC1. Interacts (via N-terminus) with VPS13B. Ubiquitous. Highly expressed in brain.

Its subcellular location is the endosome membrane. It is found in the golgi apparatus membrane. It localises to the endomembrane system. The protein localises to the early endosome membrane. The protein resides in the recycling endosome membrane. SNARE promoting fusion of transport vesicles with target membranes. Together with SNARE STX6, promotes movement of vesicles from endosomes to the cell membrane, and may therefore function in the endocytic recycling pathway. Through complex formation with GRIP1, GRIA2 and NSG1 controls the intracellular fate of AMPAR and the endosomal sorting of the GRIA2 subunit toward recycling and membrane targeting. The protein is Syntaxin-12 (Stx12) of Rattus norvegicus (Rat).